The primary structure comprises 352 residues: Nodal homolog 4-B (352 aa).

The first 18 residues, 1-18, serve as a signal peptide directing secretion; the sequence is MHLYFSCFILLFVPGGKS. Positions 19-278 are excised as a propeptide; the sequence is LGINSHLKHM…TIANSRRHRR (260 aa). 4 N-linked (GlcNAc...) asparagine glycosylation sites follow: Asn30, Asn37, Asn199, and Asn238. A disordered region spans residues 197-223; sequence GKNHSEGHMKQPKKLHRAKSAERRYQQ.

The protein belongs to the TGF-beta family. As to quaternary structure, homodimer; disulfide-linked.

It localises to the secreted. Cooperation and regulatory loops of multiple nodals are essential for mesendoderm patterning in early embryos. Plays a role in mesoderm formation and may be required for neural development. The sequence is that of Nodal homolog 4-B (nodal4-b) from Xenopus laevis (African clawed frog).